A 156-amino-acid polypeptide reads, in one-letter code: Endogenous retrovirus group K member 113 Pro protein (156 aa).

The region spanning 21 to 96 (FEGLVDTGAD…IPLNLWGRDL (76 aa)) is the Peptidase A2 domain. The active site involves Asp26. One can recognise a G-patch domain in the interval 111-156 (YSPTSQKIMTKMGYIPGKGLGKNEDGIKIPVEAKINQKREGIGYPF).

Belongs to the peptidase A2 family. HERV class-II K(HML-2) subfamily. In terms of assembly, active as a homodimer. Post-translationally, autoproteolytically processed at the N-terminus. Expected C-terminal autoprocessing not detected. The sequence shown is that of the processed Pro protein.

It carries out the reaction Processing at the authentic HIV-1 PR recognition site and release of the mature p17 matrix and the p24 capsid protein, as a result of the cleavage of the -SQNY-|-PIVQ- cleavage site.. In terms of biological role, retroviral proteases have roles in the processing of the primary translation products and the maturation of the viral particle. Endogenous Pro proteins may have kept, lost or modified their original function during evolution. The protein is Endogenous retrovirus group K member 113 Pro protein (HERVK_113) of Homo sapiens (Human).